Consider the following 433-residue polypeptide: Pyroglutamylated RF-amide peptide receptor (433 aa).

The Extracellular segment spans residues 1 to 46 (MQALNITAEQFSRLLSAHNLTREQFIHRYGLRPLVYTPELPARAKL). N-linked (GlcNAc...) asparagine glycans are attached at residues asparagine 5 and asparagine 19. The chain crosses the membrane as a helical span at residues 47–67 (AFALAGALIFALALFGNSLVI). Residues 68 to 81 (YVVTRSKAMRTVTN) lie on the Cytoplasmic side of the membrane. Residues 82–102 (IFICSLALSDLLIAFFCIPVT) traverse the membrane as a helical segment. Over 103 to 120 (MLQNISDKWLGGAFICKM) the chain is Extracellular. The helical transmembrane segment at 121–141 (VPFVQSTAVVTEILTMTCIAV) threads the bilayer. Residues 142-162 (ERHQGLIHPFKMKWQYTTRRA) are Cytoplasmic-facing. A helical membrane pass occupies residues 163-183 (FTILGVVWLAAIIVGSPMWHV). The Extracellular segment spans residues 184–212 (QRLEIKYDFLYEKEHVCCLEEWASPMHQR). A helical membrane pass occupies residues 213–233 (IYTTFILVILFLLPLVVMLVL). Residues 234-271 (YSKIGYELWIKKRVGDSSALQTIHGKEMSKIARKKKRA) are Cytoplasmic-facing. A helical membrane pass occupies residues 272–292 (VVMMVTVVALFAACWAPFHVV). Topologically, residues 293 to 313 (HMMVEYSNFEKEYDDVTIKMV) are extracellular. A helical membrane pass occupies residues 314–334 (FAVAQTIGFFNSICNPFVYAF). Residues 335–433 (MNENFKKNFL…NSTFGSGHEL (99 aa)) are Cytoplasmic-facing.

The protein belongs to the G-protein coupled receptor 1 family. Expressed widely in the brain with high levels in the cortex and hypothalamus, and moderate levels in the brain stem, caudate nucleus, midbrain hippocampus, thalamus, trigeminal ganglia and spinal cord. Particularly strong expression detected in the mitral cell layer of the olfactory bulb, accessory olfactory bulb, island of Calleja and nucleus of the solitary tract. In peripheral tissues, expressed at moderate levels in the eye, liver, kidney, pituitary gland, testis and thymus.

It localises to the cell membrane. Functionally, receptor for the orexigenic neuropeptide QRFP. The activity of this receptor is mediated by G proteins that modulate adenylate cyclase activity and intracellular calcium levels. This is Pyroglutamylated RF-amide peptide receptor (Qrfpr) from Mus musculus (Mouse).